The sequence spans 276 residues: Transmembrane protein 81 (276 aa).

The first 24 residues, 1-24 (MKTSATSFIPGSLVLAFCLPVVAT), serve as a signal peptide directing secretion. At 25–225 (SPKTLAIPEK…QHPPWKKKVA (201 aa)) the chain is on the extracellular side. A glycan (N-linked (GlcNAc...) asparagine) is linked at Asn-45. The 94-residue stretch at 83-176 (TNWLCGMLHF…NLRLVKRLYF (94 aa)) folds into the Ig-like domain. A disulfide bridge links Cys-104 with Cys-160. N-linked (GlcNAc...) asparagine glycosylation is present at Asn-211. The chain crosses the membrane as a helical span at residues 226-246 (IAVGIGVAGGVTGGVLVSIVL). The Cytoplasmic portion of the chain corresponds to 247-276 (CGRLSVIHSSASLETLQALLPKGGMLRKPD).

In terms of assembly, forms a complex with IZUMO1 and SPACA6 on spermatocyte cell membrane required for fertilization.

Its subcellular location is the cell membrane. Its function is as follows. Essential fertilization factor required for male fertility. Part of a conserved trimeric sperm complex with the essential fertilization factors IZUMO1 and SPACA6 which bridges sperm and oocyte membranes during fertilization by binding to IZUMO1R/JUNO on the oocyte. The chain is Transmembrane protein 81 (TMEM81) from Bos taurus (Bovine).